Here is a 496-residue protein sequence, read N- to C-terminus: DNA-directed DNA/RNA polymerase mu (496 aa).

Positions Met-1–Pro-22 are disordered. Residue Ser-12 is modified to Phosphoserine. Residues Ser-12 to Pro-22 show a composition bias toward low complexity. A BRCT domain is found at Pro-23–His-122. Thr-241 and Val-243 together coordinate Na(+). The segment at Arg-323–Asp-332 is involved in ssDNA binding. Residues Asp-330, Asp-332, and Asp-420 each coordinate Mg(2+).

This sequence belongs to the DNA polymerase type-X family. It depends on Mg(2+) as a cofactor.

Its subcellular location is the nucleus. It carries out the reaction DNA(n) + a 2'-deoxyribonucleoside 5'-triphosphate = DNA(n+1) + diphosphate. Gap-filling polymerase involved in repair of DNA double-strand breaks by non-homologous end joining (NHEJ). Participates in immunoglobulin (Ig) light chain gene rearrangement in V(D)J recombination. The sequence is that of DNA-directed DNA/RNA polymerase mu (Polm) from Mus musculus (Mouse).